The sequence spans 202 residues: Probable WRKY transcription factor 59 (202 aa).

A DNA-binding region (WRKY) is located at residues 103 to 168; sequence DEKVALDDGY…YEGRHNHPSP (66 aa).

It belongs to the WRKY group II-c family.

Its subcellular location is the nucleus. In terms of biological role, transcription factor. Interacts specifically with the W box (5'-(T)TGAC[CT]-3'), a frequently occurring elicitor-responsive cis-acting element. The protein is Probable WRKY transcription factor 59 (WRKY59) of Arabidopsis thaliana (Mouse-ear cress).